The following is a 102-amino-acid chain: Small ribosomal subunit protein uS10 (102 aa).

This sequence belongs to the universal ribosomal protein uS10 family. As to quaternary structure, part of the 30S ribosomal subunit.

Its function is as follows. Involved in the binding of tRNA to the ribosomes. The polypeptide is Small ribosomal subunit protein uS10 (Pelobacter propionicus (strain DSM 2379 / NBRC 103807 / OttBd1)).